A 231-amino-acid polypeptide reads, in one-letter code: Thermonuclease (231 aa).

Positions 1-26 (MLVMTEYLLSAGICMAIVSILLIGMA) are cleaved as a signal peptide. 2 propeptides span residues 27 to 63 (ISNVSKGQYAKRFFFFATSCLVLTLVVVSSLSSSANA) and 64 to 82 (SQTDNGVNRSGSEDPTVYS). The span at 61–73 (ANASQTDNGVNRS) shows a compositional bias: polar residues. The tract at residues 61–86 (ANASQTDNGVNRSGSEDPTVYSATST) is disordered. D103 contributes to the Ca(2+) binding site. The active site involves R117. Residues D122 and T123 each coordinate Ca(2+). Catalysis depends on residues E125 and R169. The segment covering 203–219 (HEQHLRKSEAQAKKEKL) has biased composition (basic and acidic residues). The segment at 203–231 (HEQHLRKSEAQAKKEKLNIWSEDNADSGQ) is disordered.

Belongs to the thermonuclease family. Ca(2+) is required as a cofactor.

The protein resides in the secreted. The protein localises to the membrane. The catalysed reaction is Endonucleolytic cleavage to nucleoside 3'-phosphates and 3'-phosphooligonucleotide end-products.. Enzyme that catalyzes the hydrolysis of both DNA and RNA at the 5' position of the phosphodiester bond. The protein is Thermonuclease of Staphylococcus aureus.